We begin with the raw amino-acid sequence, 95 residues long: Small ribosomal subunit protein bS6 (95 aa).

Belongs to the bacterial ribosomal protein bS6 family.

Its function is as follows. Binds together with bS18 to 16S ribosomal RNA. This chain is Small ribosomal subunit protein bS6, found in Nocardia farcinica (strain IFM 10152).